The sequence spans 292 residues: 33 kDa chaperonin (292 aa).

2 cysteine pairs are disulfide-bonded: Cys-230-Cys-232 and Cys-263-Cys-266.

The protein belongs to the HSP33 family. In terms of processing, under oxidizing conditions two disulfide bonds are formed involving the reactive cysteines. Under reducing conditions zinc is bound to the reactive cysteines and the protein is inactive.

It is found in the cytoplasm. In terms of biological role, redox regulated molecular chaperone. Protects both thermally unfolding and oxidatively damaged proteins from irreversible aggregation. Plays an important role in the bacterial defense system toward oxidative stress. The polypeptide is 33 kDa chaperonin (Enterobacter sp. (strain 638)).